The sequence spans 109 residues: Elicitor peptide 2 (109 aa).

Positions 1 to 73 (MEKLDKRREE…KDDDVVVLLR (73 aa)) are excised as a propeptide. The span at 74 to 88 (DNKAKSKKRDKEKPS) shows a compositional bias: basic and acidic residues. The interval 74 to 109 (DNKAKSKKRDKEKPSSGRPGQTNSVPNAAIQVYKED) is disordered.

Belongs to the brassicaceae elicitor peptide family.

Elicitor of plant defense. In Arabidopsis thaliana (Mouse-ear cress), this protein is Elicitor peptide 2 (PEP2).